Reading from the N-terminus, the 769-residue chain is MDIGKKHVIPKSQYRRKRREFFHNEDREENLNQHQDKQNIDNTTLKKAEKQIHKDSIDKHERFKNSLSSHLEQRNRDVNENKAEESKSNQDSKSAYNRDHYLTDDVSKKQNSLDSVDQDTEKSKYYEQNSEATLSTKSTDKVESSDMRKLSPDKNKVGHEEQHVLSKPSEHDKETRIDFESSRTDSDSSMQTEKIKKDSSDGNESSNLKSEVISDKSNTVPKLSESDDEVNNQKPLTLPEEQKLKRQQSQNEQTKTYTYGDSEQNDKSNHENDLSHHTPSKSDDKDNVMREDHIVDNNPDNDINTPSLSKIDDDRKLDEKIHVEDKHKQNADSSETVGYQSQSSVSHRSTEKRNMAINDHHKLNGQKLNTKTSANNNQKKATSKLNKGRATNNNYSDILKKFWMMYWPKLVILMGIIILIVILNAIFNNVNKNDRMNDNNDADAQKYTTTMKNANNTVKSVVTVENETSKDSSLPKDKASQDEVGSGVVYKKSGDTLYIVTNAHVVGDKENQKITFSNNKSVVGKVLGKDKWSDLAVVKATSSDSSVKEIAIGDSNNLVLGEPILVVGNPLGVDFKGTVTEGIISGLNRNVLIDFDKDNKYDMLMKAFQIDASVNPGNSGGAVVNREGKLIGVVAAKISMPNVENMSFAIPVNEVQKIVKDLETKGKIDYPDVGVKMKNIASLNSFERQAVKLPGKVKNGVVVDQVDNNGLADQSSLKKGDVITELDGKLLEDDLRFRQIIFSHKDDLKSITAKIYRDGKEKEINIKLK.

The segment covering 1–20 (MDIGKKHVIPKSQYRRKRRE) has biased composition (basic residues). Residues 1-390 (MDIGKKHVIP…ATSKLNKGRA (390 aa)) form a disordered region. Composition is skewed to basic and acidic residues over residues 21-64 (FFHN…ERFK) and 71-108 (LEQRNRDVNENKAEESKSNQDSKSAYNRDHYLTDDVSK). Residues 126 to 137 (YEQNSEATLSTK) show a composition bias toward polar residues. The segment covering 138–186 (STDKVESSDMRKLSPDKNKVGHEEQHVLSKPSEHDKETRIDFESSRTDS) has biased composition (basic and acidic residues). Composition is skewed to polar residues over residues 202–221 (GNESSNLKSEVISDKSNTVP) and 247–262 (QQSQNEQTKTYTYGDS). Over residues 264–295 (QNDKSNHENDLSHHTPSKSDDKDNVMREDHIV) the composition is skewed to basic and acidic residues. The span at 298 to 308 (NPDNDINTPSL) shows a compositional bias: polar residues. Residues 310 to 330 (KIDDDRKLDEKIHVEDKHKQN) are compositionally biased toward basic and acidic residues. The segment covering 331 to 347 (ADSSETVGYQSQSSVSH) has biased composition (polar residues). A compositionally biased stretch (basic and acidic residues) spans 348–362 (RSTEKRNMAINDHHK). Polar residues predominate over residues 366 to 390 (QKLNTKTSANNNQKKATSKLNKGRA). The chain crosses the membrane as a helical span at residues 410–430 (LVILMGIIILIVILNAIFNNV). Residues histidine 504, aspartate 534, and serine 619 each act as charge relay system in the active site. Positions 680-733 (IASLNSFERQAVKLPGKVKNGVVVDQVDNNGLADQSSLKKGDVITELDGKLLED) constitute a PDZ domain.

The protein belongs to the peptidase S1C family.

Its subcellular location is the cell membrane. The sequence is that of Serine protease HtrA-like from Staphylococcus aureus (strain bovine RF122 / ET3-1).